A 312-amino-acid chain; its full sequence is NADH-ubiquinone oxidoreductase chain 1 (312 aa).

Helical transmembrane passes span 3–23, 77–97, 104–124, 150–170, 174–194, 226–246, 250–270, and 289–309; these read FILS…SVAF, ISPI…PFFV, LGGL…MVAG, LALI…VYFF, IYVW…TISL, LIFM…CVIF, DVFN…FIWA, and CFLS…ILLF.

The protein belongs to the complex I subunit 1 family.

The protein resides in the mitochondrion inner membrane. It catalyses the reaction a ubiquinone + NADH + 5 H(+)(in) = a ubiquinol + NAD(+) + 4 H(+)(out). Functionally, core subunit of the mitochondrial membrane respiratory chain NADH dehydrogenase (Complex I) that is believed to belong to the minimal assembly required for catalysis. Complex I functions in the transfer of electrons from NADH to the respiratory chain. The immediate electron acceptor for the enzyme is believed to be ubiquinone. This chain is NADH-ubiquinone oxidoreductase chain 1 (mt:ND1), found in Drosophila subobscura (Fruit fly).